Reading from the N-terminus, the 249-residue chain is MNAPGGRRKEGRRTHRPREQDRNVQLSKALSYALRHGALKLGLPMRADGFVPLQALLQLPQFHSFSIEDVQLVVNTNEKQRFTLQPGEPSTGLLIRANQGHSLQVPELELTPLETPQALPLTLVHGTFWKHWPSILLKGLSRQGRTHIHLASGLPGDPGVISGIRPNCEVAVFIDGPLALTDGIPFFCSANGVILTPGNAEGFLLPKYFKEALQLRPTRKPLSLAGDKETETQSGPKLSSRGGRRKIQQ.

M1 is subject to N-acetylmethionine. 2 disordered regions span residues 1 to 25 (MNAPGGRRKEGRRTHRPREQDRNVQ) and 220 to 249 (KPLSLAGDKETETQSGPKLSSRGGRRKIQQ).

It belongs to the KptA/TPT1 family.

The enzyme catalyses 2'-phospho-[ligated tRNA] + NAD(+) = mature tRNA + ADP-alpha-D-ribose 1'',2''-cyclic phosphate + nicotinamide. Functionally, catalyzes the last step of tRNA splicing, the transfer of the splice junction 2'-phosphate from ligated tRNA to NAD to produce ADP-ribose 1''-2'' cyclic phosphate. The polypeptide is tRNA 2'-phosphotransferase 1 (Trpt1) (Mus musculus (Mouse)).